Consider the following 269-residue polypeptide: Ribosomal RNA small subunit methyltransferase A (269 aa).

Residues histidine 12, leucine 14, glycine 39, glutamate 60, aspartate 81, and asparagine 103 each contribute to the S-adenosyl-L-methionine site.

The protein belongs to the class I-like SAM-binding methyltransferase superfamily. rRNA adenine N(6)-methyltransferase family. RsmA subfamily.

It is found in the cytoplasm. The catalysed reaction is adenosine(1518)/adenosine(1519) in 16S rRNA + 4 S-adenosyl-L-methionine = N(6)-dimethyladenosine(1518)/N(6)-dimethyladenosine(1519) in 16S rRNA + 4 S-adenosyl-L-homocysteine + 4 H(+). Its function is as follows. Specifically dimethylates two adjacent adenosines (A1518 and A1519) in the loop of a conserved hairpin near the 3'-end of 16S rRNA in the 30S particle. May play a critical role in biogenesis of 30S subunits. The chain is Ribosomal RNA small subunit methyltransferase A from Leptothrix cholodnii (strain ATCC 51168 / LMG 8142 / SP-6) (Leptothrix discophora (strain SP-6)).